The primary structure comprises 681 residues: Long-chain-fatty-acid--CoA ligase heimdall (681 aa).

ATP contacts are provided by residues 223–231 (TSGTVGMPK), 414–419 (ECYGMS), Asp-491, Arg-506, and Lys-639.

Belongs to the ATP-dependent AMP-binding enzyme family. Bubblegum subfamily.

The enzyme catalyses a long-chain fatty acid + ATP + CoA = a long-chain fatty acyl-CoA + AMP + diphosphate. Its function is as follows. Mediates activation of long-chain fatty acids for both synthesis of cellular lipids, and degradation via beta-oxidation. Probably by regulating lipid storage and catabolism, plays a role in neuronal function. The polypeptide is Long-chain-fatty-acid--CoA ligase heimdall (Drosophila melanogaster (Fruit fly)).